Here is a 598-residue protein sequence, read N- to C-terminus: Elongation factor 4 (598 aa).

In terms of domain architecture, tr-type G spans 4–181 (KKIRNFAIIA…AIVNLIPPPQ (178 aa)). Residues 16–21 (DHGKST) and 128–131 (NKID) each bind GTP.

It belongs to the TRAFAC class translation factor GTPase superfamily. Classic translation factor GTPase family. LepA subfamily.

Its subcellular location is the cell membrane. It catalyses the reaction GTP + H2O = GDP + phosphate + H(+). Its function is as follows. Required for accurate and efficient protein synthesis under certain stress conditions. May act as a fidelity factor of the translation reaction, by catalyzing a one-codon backward translocation of tRNAs on improperly translocated ribosomes. Back-translocation proceeds from a post-translocation (POST) complex to a pre-translocation (PRE) complex, thus giving elongation factor G a second chance to translocate the tRNAs correctly. Binds to ribosomes in a GTP-dependent manner. This Mesomycoplasma hyopneumoniae (strain 7448) (Mycoplasma hyopneumoniae) protein is Elongation factor 4.